Reading from the N-terminus, the 107-residue chain is Early E3A 12.5 kDa protein (107 aa).

This sequence belongs to the adenoviridae E3A-2 family.

In Homo sapiens (Human), this protein is Early E3A 12.5 kDa protein.